The sequence spans 156 residues: Protein-export protein SecB (156 aa).

The protein belongs to the SecB family. Homotetramer, a dimer of dimers. One homotetramer interacts with 1 SecA dimer.

The protein localises to the cytoplasm. In terms of biological role, one of the proteins required for the normal export of preproteins out of the cell cytoplasm. It is a molecular chaperone that binds to a subset of precursor proteins, maintaining them in a translocation-competent state. It also specifically binds to its receptor SecA. This Paraburkholderia phymatum (strain DSM 17167 / CIP 108236 / LMG 21445 / STM815) (Burkholderia phymatum) protein is Protein-export protein SecB.